The sequence spans 250 residues: HGSTKWCPSPDAAQKYACCHHGMATYVLGSENEMPWKFDRAYKSDITHVMDEMKLHYTDKYHVEYKISDMTGAEVTDIKLESSVVFEPGLGKYGEGRAWIEPVTSAVRIRKNLNDLSGDELILRNYIKQMTKDGSYQQIAAFHGLPAQCPSEDGTTVHTCCLHGMPTFPHWHRLYVALVEDELLSRGSRSGRPYWDWIDPFDRLPDFFNDATYYNSRTLHIESNPFFRGSMSFANTLTDRDAQDVIYNNH.

Cu cation is bound at residue His1. The unit C stretch occupies residues 1–106; the sequence is HGSTKWCPSP…RAWIEPVTSA (106 aa). Cys7 and Cys18 are disulfide-bonded. A cross-link (2'-(S-cysteinyl)-histidine (Cys-His)) is located at residues 19 to 21; that stretch reads CHH. Residues His21 and His143 each coordinate Cu cation. Residues 107–250 form a unit D region; that stretch reads VRIRKNLNDL…DAQDVIYNNH (144 aa). The cysteines at positions 149 and 160 are disulfide-linked. The segment at residues 161–163 is a cross-link (2'-(S-cysteinyl)-histidine (Cys-His)); that stretch reads CLH. His172 contacts Cu cation.

This sequence belongs to the tyrosinase family. Hemocyanin subfamily. Decamers of large identical subunits (390 kDa), each containing 8 globular oxygen-binding functional units. Cu(2+) is required as a cofactor.

Hemocyanins are copper-containing oxygen carriers occurring freely dissolved in the hemolymph of many mollusks and arthropods. This Sepia officinalis (Common cuttlefish) protein is Hemocyanin, units C and D.